The chain runs to 295 residues: tRNA dimethylallyltransferase (295 aa).

Residue Gly-11–Ser-18 coordinates ATP. Thr-13–Ser-18 is a binding site for substrate. Interaction with substrate tRNA stretches follow at residues Asp-36–Gln-39 and Gln-158–Arg-162.

Belongs to the IPP transferase family. As to quaternary structure, monomer. Requires Mg(2+) as cofactor.

It carries out the reaction adenosine(37) in tRNA + dimethylallyl diphosphate = N(6)-dimethylallyladenosine(37) in tRNA + diphosphate. In terms of biological role, catalyzes the transfer of a dimethylallyl group onto the adenine at position 37 in tRNAs that read codons beginning with uridine, leading to the formation of N6-(dimethylallyl)adenosine (i(6)A). This is tRNA dimethylallyltransferase from Bartonella quintana (strain Toulouse) (Rochalimaea quintana).